Here is a 271-residue protein sequence, read N- to C-terminus: uncharacterized protein (271 aa).

Helical transmembrane passes span 30–50, 189–209, and 218–238; these read IWFP…GMLL, ALAA…YFLI, and FLVT…IFAC.

The protein localises to the cell membrane. This is an uncharacterized protein from Aquifex aeolicus (strain VF5).